A 367-amino-acid chain; its full sequence is Dimethyladenosine transferase 1, mitochondrial (367 aa).

The N-terminal 16 residues, 1–16, are a transit peptide targeting the mitochondrion; the sequence is MASASRLPPLPALRDF. S-adenosyl-L-methionine-binding positions include 30–33, asparagine 31, leucine 33, glycine 58, glutamate 80, aspartate 106, and asparagine 141; that span reads QNYL.

The protein belongs to the class I-like SAM-binding methyltransferase superfamily. rRNA adenine N(6)-methyltransferase family. KsgA subfamily.

It is found in the mitochondrion. Probable S-adenosyl-L-methionine-dependent methyltransferase which specifically dimethylates mitochondrial 12S rRNA at the conserved stem loop. Also required for basal transcription of mitochondrial DNA. Stimulates transcription independently of the methyltransferase activity. The sequence is that of Dimethyladenosine transferase 1, mitochondrial (tfbm-1) from Caenorhabditis elegans.